The chain runs to 138 residues: Cysteine desulfuration protein SufE (138 aa).

Catalysis depends on Cys-51, which acts as the Cysteine persulfide intermediate.

This sequence belongs to the SufE family. In terms of assembly, homodimer. Interacts with SufS.

It localises to the cytoplasm. Its pathway is cofactor biosynthesis; iron-sulfur cluster biosynthesis. Its function is as follows. Participates in cysteine desulfuration mediated by SufS. Cysteine desulfuration mobilizes sulfur from L-cysteine to yield L-alanine and constitutes an essential step in sulfur metabolism for biosynthesis of a variety of sulfur-containing biomolecules. Functions as a sulfur acceptor for SufS, by mediating the direct transfer of the sulfur atom from the S-sulfanylcysteine of SufS, an intermediate product of cysteine desulfuration process. In Salmonella agona (strain SL483), this protein is Cysteine desulfuration protein SufE.